The primary structure comprises 373 residues: SWI/SNF-related matrix-associated actin-dependent regulator of chromatin subfamily B member 1-A (373 aa).

A DNA-binding region spans residues 1–101 (MALSKTYGQK…DEKYKAVSIS (101 aa)).

Belongs to the SNF5 family. Component of the multiprotein chromatin-remodeling complexes SWI/SNF. Component of neural progenitors-specific chromatin remodeling complex (npBAF complex) and the neuron-specific chromatin remodeling complex (nBAF complex). Component of the BAF (SWI/SNF) chromatin remodeling complex. Component of the SWI/SNF-B (PBAF) chromatin remodeling complex. Binds to double-stranded DNA.

It is found in the nucleus. Involved in chromatin-remodeling. Core component of the BAF (SWI/SNF) complex. This ATP-dependent chromatin-remodeling complex plays important roles in cell proliferation and differentiation, in cellular antiviral activities and inhibition of tumor formation. Belongs to the neural progenitors-specific chromatin remodeling complex (npBAF complex) and the neuron-specific chromatin remodeling complex (nBAF complex) and may play a role in neural development. This chain is SWI/SNF-related matrix-associated actin-dependent regulator of chromatin subfamily B member 1-A (smarcb1a), found in Danio rerio (Zebrafish).